Reading from the N-terminus, the 153-residue chain is Histone H2B.6 (153 aa).

Composition is skewed to basic and acidic residues over residues 1 to 28 (MAPKAEKKPAAKKPAEEEPAAEKAEKAP) and 36 to 53 (EKRLPAGKGEKGSGEGKK). Residues 1–60 (MAPKAEKKPAAKKPAEEEPAAEKAEKAPAGKKPKAEKRLPAGKGEKGSGEGKKAGRKKGK) form a disordered region. 2 positions are modified to N6-acetyllysine: Lys-7 and Lys-37. Lys-149 is covalently cross-linked (Glycyl lysine isopeptide (Lys-Gly) (interchain with G-Cter in ubiquitin)).

This sequence belongs to the histone H2B family. As to quaternary structure, the nucleosome is a histone octamer containing two molecules each of H2A, H2B, H3 and H4 assembled in one H3-H4 heterotetramer and two H2A-H2B heterodimers. The octamer wraps approximately 147 bp of DNA. Post-translationally, can be acetylated to form H2BK6ac and H2BK33ac. Monoubiquitinated by BRE1 to form H2BK143ub1 and deubiquitinated by UBP26. Required for heterochromatic histone H3 di- and trimethylation at H3K4me. May give a specific tag for epigenetic transcriptional activation.

Its subcellular location is the nucleus. It localises to the chromosome. Functionally, core component of nucleosome. Nucleosomes wrap and compact DNA into chromatin, limiting DNA accessibility to the cellular machineries which require DNA as a template. Histones thereby play a central role in transcription regulation, DNA repair, DNA replication and chromosomal stability. DNA accessibility is regulated via a complex set of post-translational modifications of histones, also called histone code, and nucleosome remodeling. The protein is Histone H2B.6 (H2B.6) of Oryza sativa subsp. indica (Rice).